A 314-amino-acid chain; its full sequence is Glutathione synthetase (314 aa).

The ATP-grasp domain occupies 125–311 (EKLAAQLFPQ…IAGQLFDAIE (187 aa)). Position 151 to 208 (151 to 208 (FVQKQEQAILKPLDGMGGHSIFRSSNGDPNLNVILETLTDGGRTLAIAQRYLQQIIEG)) interacts with ATP. Mg(2+) is bound by residues Glu-282 and Asn-284.

This sequence belongs to the prokaryotic GSH synthase family. Requires Mg(2+) as cofactor. It depends on Mn(2+) as a cofactor.

It carries out the reaction gamma-L-glutamyl-L-cysteine + glycine + ATP = glutathione + ADP + phosphate + H(+). It functions in the pathway sulfur metabolism; glutathione biosynthesis; glutathione from L-cysteine and L-glutamate: step 2/2. The chain is Glutathione synthetase from Xylella fastidiosa (strain 9a5c).